Consider the following 320-residue polypeptide: Protein HEXIM1 (320 aa).

Residues Met1 to Leu124 form a disordered region. Positions Phe9 to Thr19 are enriched in polar residues. Basic and acidic residues predominate over residues Val24–Trp47. A Phosphoserine modification is found at Ser98. A compositionally biased stretch (basic residues) spans Val109–Leu124. The segment at Lys111–Lys138 is basic region; mediates nuclear localization and interaction with 7SK snRNA and NR3C1. The interaction with P-TEFb stretch occupies residues Pro163–Thr166. Positions Met171–Gly211 are autoinhibitory acidic region; in absence of 7SK snRNA interacts with the basic region preventing interaction with P-TEFb and modulating subcellular localization. The interval His174–Phe223 is disordered. Ser194 is modified (phosphoserine). Thr197 is modified (phosphothreonine). Residues Thr197 to Gly212 show a composition bias toward acidic residues. Ser198, Ser213, and Ser221 each carry phosphoserine. A coiled-coil region spans residues Ser244–Gln310. Residues Glu247 to Arg275 form a mediates interaction with CCNT1 region. Residues Leu271–Ser316 are required for inhibition of ESR1-dependent transcription.

The protein belongs to the HEXIM family. Homooligomer and heterooligomer with HEXIM2; probably dimeric. Core component of the 7SK RNP complex, at least composed of 7SK RNA, LARP7, MEPCE, HEXIM1 (or HEXIM2) and P-TEFb (composed of CDK9 and CCNT1/cyclin-T1). Interacts with the N-CoR complex through NCOR1. Interacts with ESR1 and NR3C1. May interact with NF-kappa-B through RELA. Interacts with CCNT2; mediates formation of a tripartite complex with KPNA2. Part of the HDP-RNP complex composed of at least HEXIM1, PRKDC, XRCC5, XRCC6, paraspeckle proteins (SFPQ, NONO, PSPC1, RBM14, and MATR3) and NEAT1 non-coding RNA.

The protein resides in the nucleus. The protein localises to the cytoplasm. In terms of biological role, transcriptional regulator which functions as a general RNA polymerase II transcription inhibitor. Core component of the 7SK RNP complex: in cooperation with 7SK snRNA sequesters P-TEFb in a large inactive 7SK snRNP complex preventing RNA polymerase II phosphorylation and subsequent transcriptional elongation. May also regulate NF-kappa-B, ESR1, NR3C1 and CIITA-dependent transcriptional activity. Plays a role in the regulation of DNA virus-mediated innate immune response by assembling into the HDP-RNP complex, a complex that serves as a platform for IRF3 phosphorylation and subsequent innate immune response activation through the cGAS-STING pathway. This chain is Protein HEXIM1 (HEXIM1), found in Bos taurus (Bovine).